We begin with the raw amino-acid sequence, 756 residues long: Receptor-like protein 3 (756 aa).

The N-terminal stretch at 1 to 50 (MTNEGRFKAKGFVRTSSTTRPIQALSFHMIGILLQCVLFISVLSIAVSEA) is a signal peptide. Positions 51-88 (LCNSQDRESLLWFSGNVSSSVSPLNWNPSIDCCSWEGI) are N-cap. Residues 51–725 (LCNSQDRESL…ADTEDEEELK (675 aa)) lie on the Extracellular side of the membrane. N-linked (GlcNAc...) asparagine glycosylation is present at Asn66. LRR repeat units lie at residues 95-119 (DSHI…VLRL), 120-143 (HHLS…FLSA), 145-169 (DQLK…TFRN), 174-199 (CFPI…IFMQ), 201-225 (TFDL…MCKS), 226-250 (SPQL…LGRC), 252-274 (KLSV…IYNL), 275-298 (SELE…ITHL), 299-322 (TKLK…IGQL), 323-346 (SRLQ…LANC), 348-370 (NLVK…DFSR), 371-395 (FQSL…VHSC), 397-419 (SLSA…VLEL), 420-443 (ESLS…GILQ), 445-471 (CRNL…LISS), 474-498 (FPNL…LIKL), 499-521 (KSLA…WLGT), and 522-546 (FPHL…LFQL). N-linked (GlcNAc...) asparagine glycosylation is found at Asn126 and Asn169. The N-linked (GlcNAc...) asparagine glycan is linked to Asn208. N-linked (GlcNAc...) asparagine glycans are attached at residues Asn262 and Asn273. Asn334 and Asn345 each carry an N-linked (GlcNAc...) asparagine glycan. N-linked (GlcNAc...) asparagine glycosylation occurs at Asn381. Asn434, Asn447, and Asn459 each carry an N-linked (GlcNAc...) asparagine glycan. Residues 548 to 569 (ALMSQKAYDATERNYLKLPVFV) form an LRR 19; degenerate repeat. LRR repeat units lie at residues 570 to 593 (SPNN…IYIR), 608 to 631 (LKVL…ELSK), 632 to 656 (LTSL…LTSL), and 658 to 681 (YMSY…QFDT). N-linked (GlcNAc...) asparagine glycosylation occurs at Asn573. Residue Asn666 is glycosylated (N-linked (GlcNAc...) asparagine). Residues 699-725 (LTSCKASTKLPATTTNKADTEDEEELK) are C-cap/acidic domain. A helical transmembrane segment spans residues 726–746 (FIFILGVATGFFVSYCFYWCF). The Cytoplasmic segment spans residues 747 to 756 (FARLDAFISK).

This sequence belongs to the RLP family. Expressed at very low levels in the shoot apex.

It localises to the cell membrane. Functionally, involved in the perception of CLV3 and CLV3-like peptides, that act as extracellular signals regulating meristems maintenance. Contributes, with WAKL22/RFO1, to resistance to F.oxysporum (f.) matthioli in cv. Columbia relative to cv. Ty-0. In Arabidopsis thaliana (Mouse-ear cress), this protein is Receptor-like protein 3.